Reading from the N-terminus, the 385-residue chain is Cytochrome b (385 aa).

Residues 1–27 lie on the Mitochondrial matrix side of the membrane; that stretch reads MRLLKSHPLLKLVNSYLIDASQPSNIS. An a ubiquinone-binding site is contributed by tyrosine 16. A helical transmembrane segment spans residues 28–51; sequence YLWNFGSLLACCLIIQIVTGVTLA. Over 52–74 the chain is Mitochondrial intermembrane; sequence MHYSPNVLEAFNSIEHIMRDVNN. Residues 75–102 traverse the membrane as a helical segment; that stretch reads GWLVRYLHSNTASAFFFLVYLHIGRGMY. Positions 82 and 96 each coordinate heme b. At 103-110 the chain is on the mitochondrial matrix side; it reads YGSYRAPR. The helical transmembrane segment at 111–135 threads the bilayer; sequence TLVWAIGTVILILMMATAFLGYVLP. Over 136–172 the chain is Mitochondrial intermembrane; sequence YGQMSLWGATVITNLISAIPWIGQDIVEFIWGGFSVN. Residues 173-205 form a helical membrane-spanning segment; sequence NATLNRFFALHFVLPFILAALVLMHLIALHDTA. Positions 183 and 197 each coordinate heme b. Histidine 202 is an a ubiquinone binding site. The Mitochondrial matrix portion of the chain corresponds to 206 to 224; it reads GSSNPLGVSGNYDRITFAP. The chain crosses the membrane as a helical span at residues 225 to 247; that stretch reads YYLFKDLITIFIFIYVLSSFVFF. Over 248–288 the chain is Mitochondrial intermembrane; that stretch reads MPNVLGDSENYIMANPMQTPPAIVPEWYLLPFYAILRSIPN. The helical transmembrane segment at 289–309 threads the bilayer; it reads KLLGVIAMFSAILAIMLLPIT. Residues 310–320 are Mitochondrial matrix-facing; sequence DLGRSKGLQFR. A helical transmembrane segment spans residues 321 to 341; the sequence is PLSKFAFWAFVVNFLILMKLG. The Mitochondrial intermembrane segment spans residues 342-348; the sequence is ACHVESP. Residues 349–365 form a helical membrane-spanning segment; sequence FIELGQFSTIFYFSYFI. Residues 366–385 lie on the Mitochondrial matrix side of the membrane; the sequence is FIVPVLSLIENTLVDLNYLK.

It belongs to the cytochrome b family. In terms of assembly, component of the ubiquinol-cytochrome c oxidoreductase (cytochrome b-c1 complex, complex III, CIII), a multisubunit enzyme composed of 10 subunits. The complex is composed of 3 respiratory subunits cytochrome b (cob), cytochrome c1 (cyt-1) and Rieske protein (fes-1), 2 core protein subunits pep and ucr-1, and 5 low-molecular weight protein subunits qcr6, qcr7, qcr8, qcr9 and probably NCU16844/qcr10. The complex exists as an obligatory dimer and forms supercomplexes (SCs) in the inner mitochondrial membrane with NADH-ubiquinone oxidoreductase (complex I, CI) and cytochrome c oxidase (complex IV, CIV), resulting in different assemblies (supercomplexes SCI(1)III(2), SCIII(2)IV(1) and SCIII(2)IV(2) as well as higher order I(x)III(y)IV(z) megacomplexes). It depends on heme b as a cofactor.

The protein localises to the mitochondrion inner membrane. The enzyme catalyses a quinol + 2 Fe(III)-[cytochrome c](out) = a quinone + 2 Fe(II)-[cytochrome c](out) + 2 H(+)(out). Functionally, component of the ubiquinol-cytochrome c oxidoreductase, a multisubunit transmembrane complex that is part of the mitochondrial electron transport chain which drives oxidative phosphorylation. The respiratory chain contains 3 multisubunit complexes succinate dehydrogenase (complex II, CII), ubiquinol-cytochrome c oxidoreductase (cytochrome b-c1 complex, complex III, CIII) and cytochrome c oxidase (complex IV, CIV), that cooperate to transfer electrons derived from NADH and succinate to molecular oxygen, creating an electrochemical gradient over the inner membrane that drives transmembrane transport and the ATP synthase. The cytochrome b-c1 complex catalyzes electron transfer from ubiquinol to cytochrome c, linking this redox reaction to translocation of protons across the mitochondrial inner membrane, with protons being carried across the membrane as hydrogens on the quinol. In the process called Q cycle, 2 protons are consumed from the matrix, 4 protons are released into the intermembrane space and 2 electrons are passed to cytochrome c. Cytochrome b is a catalytic core subunit containing 2 b-type hemes BL and BH topographically segregated in the quinone reduction (Qi) and quinol oxidation (Q0) sites on opposite sides of the membrane. The chain is Cytochrome b (cob) from Neurospora crassa (strain ATCC 24698 / 74-OR23-1A / CBS 708.71 / DSM 1257 / FGSC 987).